We begin with the raw amino-acid sequence, 822 residues long: Calpain-3 (822 aa).

The interval methionine 1–glycine 36 is disordered. The Calpain catalytic domain occupies leucine 74–threonine 418. Residues cysteine 129, histidine 335, and asparagine 359 contribute to the active site. The segment at alanine 419–asparagine 587 is domain III. A linker region spans residues threonine 588–glutamate 650. Residues isoleucine 604 to glutamine 652 form a disordered region. Positions glutamate 623 to alanine 635 are enriched in basic and acidic residues. 4 consecutive EF-hand domains span residues glutamate 650 to lysine 684, phenylalanine 693 to lysine 726, lysine 723 to histidine 758, and valine 788 to alanine 822. A domain IV region spans residues glutamate 651–alanine 822. 18 residues coordinate Ca(2+): alanine 663, aspartate 666, glutamate 668, glutamate 673, aspartate 706, aspartate 708, serine 710, arginine 712, glutamate 717, aspartate 736, aspartate 738, serine 740, threonine 742, glutamate 747, aspartate 801, aspartate 803, aspartate 805, and isoleucine 807.

This sequence belongs to the peptidase C2 family. As to quaternary structure, homodimer; via EF-hand domain 4. Interacts with TTN/titin. Interacts with CMYA5; this interaction, which results in CMYA5 proteolysis, may protect CAPN3 from autolysis. Interacts with SIMC1. Interacts with UTP25; the interaction is required for CAPN3 translocation to the nucleolus. As to expression, skeletal muscle.

It is found in the cytoplasm. Its subcellular location is the nucleus. The protein localises to the nucleolus. The catalysed reaction is Broad endopeptidase activity.. Its activity is regulated as follows. Activated by micromolar concentrations of calcium and inhibited by calpastatin. Its function is as follows. Calcium-regulated non-lysosomal thiol-protease. Proteolytically cleaves CTBP1. Mediates, with UTP25, the proteasome-independent degradation of p53/TP53. In Bos taurus (Bovine), this protein is Calpain-3 (CAPN3).